A 180-amino-acid polypeptide reads, in one-letter code: O-acetyl-ADP-ribose deacetylase (180 aa).

A Macro domain is found at 1 to 175 (MSGRINVVQG…LYQRLLGQYD (175 aa)). Residues 11-12 (DI), Asn25, 33-35 (GVD), and 122-126 (STGIY) each bind substrate. The Proton acceptor role is filled by Asp35.

This sequence belongs to the MacroD-type family. YmdB subfamily. As to quaternary structure, homodimer. Interacts with RNase III.

The enzyme catalyses 3''-O-acetyl-ADP-D-ribose + H2O = ADP-D-ribose + acetate + H(+). The catalysed reaction is 2''-O-acetyl-ADP-D-ribose + H2O = ADP-D-ribose + acetate + H(+). In terms of biological role, deacetylates O-acetyl-ADP ribose to yield ADP-ribose and free acetate. Down-regulates ribonuclease 3 (RNase III) activity. Acts by interacting directly with the region of the ribonuclease that is required for dimerization/activation. The polypeptide is O-acetyl-ADP-ribose deacetylase (Cronobacter sakazakii (strain ATCC BAA-894) (Enterobacter sakazakii)).